The chain runs to 154 residues: 6,7-dimethyl-8-ribityllumazine synthase (154 aa).

5-amino-6-(D-ribitylamino)uracil-binding positions include Phe24, 56–58 (SFE), and 80–82 (AVV). 85-86 (ET) lines the (2S)-2-hydroxy-3-oxobutyl phosphate pocket. The active-site Proton donor is the His88. Position 113 (Phe113) interacts with 5-amino-6-(D-ribitylamino)uracil. Arg127 provides a ligand contact to (2S)-2-hydroxy-3-oxobutyl phosphate.

It belongs to the DMRL synthase family.

It catalyses the reaction (2S)-2-hydroxy-3-oxobutyl phosphate + 5-amino-6-(D-ribitylamino)uracil = 6,7-dimethyl-8-(1-D-ribityl)lumazine + phosphate + 2 H2O + H(+). Its pathway is cofactor biosynthesis; riboflavin biosynthesis; riboflavin from 2-hydroxy-3-oxobutyl phosphate and 5-amino-6-(D-ribitylamino)uracil: step 1/2. Its function is as follows. Catalyzes the formation of 6,7-dimethyl-8-ribityllumazine by condensation of 5-amino-6-(D-ribitylamino)uracil with 3,4-dihydroxy-2-butanone 4-phosphate. This is the penultimate step in the biosynthesis of riboflavin. The protein is 6,7-dimethyl-8-ribityllumazine synthase of Thermococcus gammatolerans (strain DSM 15229 / JCM 11827 / EJ3).